The sequence spans 141 residues: Nucleoside diphosphate kinase 1 (141 aa).

Residues lysine 11, phenylalanine 59, arginine 87, threonine 93, arginine 104, and asparagine 114 each coordinate ATP. The Pros-phosphohistidine intermediate role is filled by histidine 117.

This sequence belongs to the NDK family. In terms of assembly, homotetramer. Requires Mg(2+) as cofactor.

It is found in the cytoplasm. It carries out the reaction a 2'-deoxyribonucleoside 5'-diphosphate + ATP = a 2'-deoxyribonucleoside 5'-triphosphate + ADP. The enzyme catalyses a ribonucleoside 5'-diphosphate + ATP = a ribonucleoside 5'-triphosphate + ADP. Functionally, major role in the synthesis of nucleoside triphosphates other than ATP. The ATP gamma phosphate is transferred to the NDP beta phosphate via a ping-pong mechanism, using a phosphorylated active-site intermediate. The polypeptide is Nucleoside diphosphate kinase 1 (Protochlamydia amoebophila (strain UWE25)).